We begin with the raw amino-acid sequence, 335 residues long: NADH-quinone oxidoreductase subunit H (335 aa).

Transmembrane regions (helical) follow at residues 11-31 (VILT…CGAL), 81-101 (MIFT…FVVI), 114-134 (IGLL…LFAG), 154-174 (VSYE…VGSF), 187-207 (LWFI…GVAV), 238-258 (FFVG…TLFF), 270-290 (QVPF…FILL), and 307-327 (WKFC…VVLY).

It belongs to the complex I subunit 1 family. In terms of assembly, NDH-1 is composed of 13 different subunits. Subunits NuoA, H, J, K, L, M, N constitute the membrane sector of the complex.

Its subcellular location is the cell inner membrane. It catalyses the reaction a quinone + NADH + 5 H(+)(in) = a quinol + NAD(+) + 4 H(+)(out). NDH-1 shuttles electrons from NADH, via FMN and iron-sulfur (Fe-S) centers, to quinones in the respiratory chain. The immediate electron acceptor for the enzyme in this species is believed to be ubiquinone. Couples the redox reaction to proton translocation (for every two electrons transferred, four hydrogen ions are translocated across the cytoplasmic membrane), and thus conserves the redox energy in a proton gradient. This subunit may bind ubiquinone. This chain is NADH-quinone oxidoreductase subunit H, found in Pseudomonas entomophila (strain L48).